The sequence spans 121 residues: Peptidyl-tRNA hydrolase (121 aa).

The protein belongs to the PTH2 family.

It localises to the cytoplasm. It carries out the reaction an N-acyl-L-alpha-aminoacyl-tRNA + H2O = an N-acyl-L-amino acid + a tRNA + H(+). The natural substrate for this enzyme may be peptidyl-tRNAs which drop off the ribosome during protein synthesis. The sequence is that of Peptidyl-tRNA hydrolase from Staphylothermus marinus (strain ATCC 43588 / DSM 3639 / JCM 9404 / F1).